The sequence spans 418 residues: AA11 family lytic polysaccharide monooxygenase B (418 aa).

The signal sequence occupies residues 1-21 (MMFSKSGLVAVAMLGASAVEA). Cu(+) contacts are provided by H22 and H82. Cystine bridges form between C50–C165, C87–C113, and C206–C240. N-linked (GlcNAc...) asparagine glycans are attached at residues N120 and N134. Residues 226–345 (DGNPSNLQPA…SSSSSNGALT (120 aa)) are disordered. The span at 254-345 (SPSTPSTSSS…SSSSSNGALT (92 aa)) shows a compositional bias: low complexity.

It belongs to the polysaccharide monooxygenase AA11 family. Requires Cu(2+) as cofactor.

The protein resides in the secreted. In terms of biological role, lytic polysaccharide monooxygenase (LPMO)-like protein that acts as a strict peroxygenase and does not catalyze a monooxygenase reaction. It is indeed hardly active on chitin, while being very active on soluble oligomers of N-acetylglucosamine. Cleaves the glycosidic bonds byoxidizing the C1 position. Also unable to oxidize cellopentaose. Probably breaks glycosidic bonds in non-polymeric substrates possibly carbohydrates in the cell wall of the fungus or its competitors. In the presence of chitotetraose, the enzyme can withstand considerable amounts of H(2)O(2), which it uses to efficiently and stoichiometrically convert this substrate. The polypeptide is AA11 family lytic polysaccharide monooxygenase B (Aspergillus fumigatus (strain ATCC MYA-4609 / CBS 101355 / FGSC A1100 / Af293) (Neosartorya fumigata)).